Reading from the N-terminus, the 189-residue chain is Cell division protein SepF (189 aa).

Over residues Phe152–Asn163 the composition is skewed to polar residues. The tract at residues Phe152–Ile189 is disordered.

Belongs to the SepF family. As to quaternary structure, homodimer. Interacts with FtsZ.

The protein localises to the cytoplasm. Its function is as follows. Cell division protein that is part of the divisome complex and is recruited early to the Z-ring. Probably stimulates Z-ring formation, perhaps through the cross-linking of FtsZ protofilaments. Its function overlaps with FtsA. This Prochlorococcus marinus (strain SARG / CCMP1375 / SS120) protein is Cell division protein SepF.